The following is a 300-amino-acid chain: Inosose dehydratase (300 aa).

The protein belongs to the IolE/MocC family. It depends on glutathione as a cofactor. Co(2+) is required as a cofactor. The cofactor is Mn(2+).

The enzyme catalyses scyllo-inosose = 3D-3,5/4-trihydroxycyclohexane-1,2-dione + H2O. In terms of biological role, catalyzes the dehydration of inosose (2-keto-myo-inositol, 2KMI or 2,4,6/3,5-pentahydroxycyclohexanone) to 3D-(3,5/4)-trihydroxycyclohexane-1,2-dione (D-2,3-diketo-4-deoxy-epi-inositol). The chain is Inosose dehydratase from Mesomycoplasma hyopneumoniae (strain 232) (Mycoplasma hyopneumoniae).